Consider the following 343-residue polypeptide: Protein RecA (343 aa).

64 to 71 provides a ligand contact to ATP; sequence GPESSGKT.

Belongs to the RecA family.

The protein localises to the cytoplasm. Its function is as follows. Can catalyze the hydrolysis of ATP in the presence of single-stranded DNA, the ATP-dependent uptake of single-stranded DNA by duplex DNA, and the ATP-dependent hybridization of homologous single-stranded DNAs. It interacts with LexA causing its activation and leading to its autocatalytic cleavage. The chain is Protein RecA from Acidiphilium cryptum (strain JF-5).